A 400-amino-acid polypeptide reads, in one-letter code: Carbamoyl phosphate synthase small chain (400 aa).

A CPSase region spans residues 1–199 (MSNETNANST…PYVIEAEGEA (199 aa)). L-glutamine contacts are provided by Ser66, Gly250, and Gly252. The Glutamine amidotransferase type-1 domain occupies 200–395 (RHTVVAYDLG…VALMDEDSEN (196 aa)). Cys278 serves as the catalytic Nucleophile. Residues Phe279, Gln282, Asn320, Gly322, and Phe323 each contribute to the L-glutamine site. Residues His368 and Glu370 contribute to the active site.

This sequence belongs to the CarA family. In terms of assembly, composed of two chains; the small (or glutamine) chain promotes the hydrolysis of glutamine to ammonia, which is used by the large (or ammonia) chain to synthesize carbamoyl phosphate. Tetramer of heterodimers (alpha,beta)4.

It carries out the reaction hydrogencarbonate + L-glutamine + 2 ATP + H2O = carbamoyl phosphate + L-glutamate + 2 ADP + phosphate + 2 H(+). The catalysed reaction is L-glutamine + H2O = L-glutamate + NH4(+). It participates in amino-acid biosynthesis; L-arginine biosynthesis; carbamoyl phosphate from bicarbonate: step 1/1. The protein operates within pyrimidine metabolism; UMP biosynthesis via de novo pathway; (S)-dihydroorotate from bicarbonate: step 1/3. Functionally, small subunit of the glutamine-dependent carbamoyl phosphate synthetase (CPSase). CPSase catalyzes the formation of carbamoyl phosphate from the ammonia moiety of glutamine, carbonate, and phosphate donated by ATP, constituting the first step of 2 biosynthetic pathways, one leading to arginine and/or urea and the other to pyrimidine nucleotides. The small subunit (glutamine amidotransferase) binds and cleaves glutamine to supply the large subunit with the substrate ammonia. The polypeptide is Carbamoyl phosphate synthase small chain (Corynebacterium efficiens (strain DSM 44549 / YS-314 / AJ 12310 / JCM 11189 / NBRC 100395)).